We begin with the raw amino-acid sequence, 339 residues long: Phenylalanine--tRNA ligase alpha subunit (339 aa).

A Mg(2+)-binding site is contributed by Glu-253.

This sequence belongs to the class-II aminoacyl-tRNA synthetase family. Phe-tRNA synthetase alpha subunit type 1 subfamily. Tetramer of two alpha and two beta subunits. Mg(2+) is required as a cofactor.

It localises to the cytoplasm. The enzyme catalyses tRNA(Phe) + L-phenylalanine + ATP = L-phenylalanyl-tRNA(Phe) + AMP + diphosphate + H(+). The chain is Phenylalanine--tRNA ligase alpha subunit from Geobacter sulfurreducens (strain ATCC 51573 / DSM 12127 / PCA).